The sequence spans 931 residues: Protein translocase subunit SecA (931 aa).

ATP contacts are provided by residues Q87, 105-109 (GEGKT), and D523. Zn(2+) contacts are provided by C915, C917, C926, and H927.

This sequence belongs to the SecA family. In terms of assembly, monomer and homodimer. Part of the essential Sec protein translocation apparatus which comprises SecA, SecYEG and auxiliary proteins SecDF-YajC and YidC. Requires Zn(2+) as cofactor.

It is found in the cell inner membrane. Its subcellular location is the cytoplasm. The catalysed reaction is ATP + H2O + cellular proteinSide 1 = ADP + phosphate + cellular proteinSide 2.. In terms of biological role, part of the Sec protein translocase complex. Interacts with the SecYEG preprotein conducting channel. Has a central role in coupling the hydrolysis of ATP to the transfer of proteins into and across the cell membrane, serving both as a receptor for the preprotein-SecB complex and as an ATP-driven molecular motor driving the stepwise translocation of polypeptide chains across the membrane. This Xanthobacter autotrophicus (strain ATCC BAA-1158 / Py2) protein is Protein translocase subunit SecA.